The chain runs to 572 residues: Proline--tRNA ligase (572 aa).

This sequence belongs to the class-II aminoacyl-tRNA synthetase family. ProS type 1 subfamily. As to quaternary structure, homodimer.

It localises to the cytoplasm. It carries out the reaction tRNA(Pro) + L-proline + ATP = L-prolyl-tRNA(Pro) + AMP + diphosphate. In terms of biological role, catalyzes the attachment of proline to tRNA(Pro) in a two-step reaction: proline is first activated by ATP to form Pro-AMP and then transferred to the acceptor end of tRNA(Pro). As ProRS can inadvertently accommodate and process non-cognate amino acids such as alanine and cysteine, to avoid such errors it has two additional distinct editing activities against alanine. One activity is designated as 'pretransfer' editing and involves the tRNA(Pro)-independent hydrolysis of activated Ala-AMP. The other activity is designated 'posttransfer' editing and involves deacylation of mischarged Ala-tRNA(Pro). The misacylated Cys-tRNA(Pro) is not edited by ProRS. This Buchnera aphidicola subsp. Acyrthosiphon pisum (strain 5A) protein is Proline--tRNA ligase.